Reading from the N-terminus, the 438-residue chain is CBL-interacting protein kinase 32 (438 aa).

Residues tyrosine 13–phenylalanine 268 enclose the Protein kinase domain. ATP contacts are provided by residues isoleucine 19–valine 27 and lysine 42. The Proton acceptor role is filled by aspartate 136. The interval aspartate 154–glutamate 183 is activation loop. The region spanning glutamate 305 to aspartate 329 is the NAF domain. Positions lysine 335–valine 364 are PPI.

It belongs to the protein kinase superfamily. CAMK Ser/Thr protein kinase family. SNF1 subfamily. Mn(2+) serves as cofactor.

It carries out the reaction L-seryl-[protein] + ATP = O-phospho-L-seryl-[protein] + ADP + H(+). The catalysed reaction is L-threonyl-[protein] + ATP = O-phospho-L-threonyl-[protein] + ADP + H(+). In terms of biological role, CIPK serine-threonine protein kinases interact with CBL proteins. Binding of a CBL protein to the regulatory NAF domain of CIPK protein lead to the activation of the kinase in a calcium-dependent manner. This chain is CBL-interacting protein kinase 32 (CIPK32), found in Oryza sativa subsp. japonica (Rice).